Consider the following 304-residue polypeptide: HTH-type transcriptional regulator TtuA (304 aa).

The region spanning 1–58 (MELEQLKCFVAAAEELHFGRAAQKMGILPASLGRHLRLLEESLGTRLMSRTTRSVALT) is the HTH lysR-type domain. The H-T-H motif DNA-binding region spans 18–37 (FGRAAQKMGILPASLGRHLR).

This sequence belongs to the LysR transcriptional regulatory family.

Transcriptional regulator of the ttuABCDE tartrate utilization operon. The protein is HTH-type transcriptional regulator TtuA (ttuA) of Agrobacterium vitis (Rhizobium vitis).